Reading from the N-terminus, the 290-residue chain is CMRF35-like molecule 1 (290 aa).

The N-terminal stretch at methionine 1–valine 19 is a signal peptide. The region spanning threonine 20 to aspartate 126 is the Ig-like V-type domain. Residues threonine 20–serine 156 lie on the Extracellular side of the membrane. 2 cysteine pairs are disulfide-bonded: cysteine 40–cysteine 108 and cysteine 54–cysteine 62. The N-linked (GlcNAc...) asparagine glycan is linked to asparagine 88. The chain crosses the membrane as a helical span at residues valine 157–alanine 177. The Cytoplasmic portion of the chain corresponds to tryptophan 178–proline 290. The disordered stretch occupies residues glycine 267–proline 290.

This sequence belongs to the CD300 family. Interacts with PTPN6/SHP-1 in a tyrosine phosphorylation dependent manner. Interacts with IL4R. Phosphorylated on tyrosine. In terms of tissue distribution, highly expressed in spleen, peripheral blood leukocyte and monocyte, and lung. Weakly expressed in thymus, heart, brain, placenta, liver, skeletal muscle, kidney, pancreas, prostate, testis, ovary, small intestine or colon. Expressed selectively in monocytes and monocyte-related cells.

Its subcellular location is the cell membrane. Acts as an inhibitory receptor for myeloid cells and mast cells. Positively regulates the phagocytosis of apoptotic cells (efferocytosis) via phosphatidylserine (PS) recognition; recognizes and binds PS as a ligand which is expressed on the surface of apoptotic cells. Plays an important role in the maintenance of immune homeostasis, by promoting macrophage-mediated efferocytosis and by inhibiting dendritic cell-mediated efferocytosis. Negatively regulates Fc epsilon receptor-dependent mast cell activation and allergic responses via binding to ceramide and sphingomyelin which act as ligands. May act as a coreceptor for interleukin 4 (IL-4). Associates with and regulates IL-4 receptor alpha-mediated responses by augmenting IL-4- and IL-13-induced signaling. Negatively regulates the Toll-like receptor (TLR) signaling mediated by MYD88 and TRIF through activation of PTPN6/SHP-1 and PTPN11/SHP-2. Inhibits osteoclast formation. Induces macrophage cell death upon engagement. This chain is CMRF35-like molecule 1 (CD300LF), found in Homo sapiens (Human).